The sequence spans 692 residues: MESKPSRIPRRISVQPSGSLSARMVSGNRGTSLNDSYHSRDSSFRLDSEYQSASASASASPYQSTWYSESEITQGARSRSQNQQRDHDSKRPKLSCTNCTSTSAGRNIGSGLNTLSDSSWRPGQVPRSSSMVLGSFGTDLMRERRDLERRRDSSISSLMDYSHRSGDFTAPAYVQERVPSSYSQGARPKENAANTLQLNSSTNHQLPSEHQTVPSSRDSSRSSFRSHFSPRQSESFRNSSHPAFSYLSSRNETPTISSSERAGSSQRPFQESSDNEGRRTTRRLLSRIASSMSSTFFSRRSSQDSLNTRSLSSENYISPRTLTSQSRNNGASSSEVNDGRASEASQGFRFLRRRWGLSSLSQNHSSEPDAENFNQESEGRNTGPWLSSSLRNRCTPLFSRRRREGRDESSRISPSDVPPRSHLFRRESNEVVHLEAQGDSLGAAASRPQASGASGNASASGSTPDLPQGGRNTGIAGILPGSLFRFAVPPALGSNLTDNVTITVDIIPSGWSSADGKSEKAKSAPSRDPEKLQKIKESLLLEDSDEEEEGDLCRICQMAAASSSNLLIEPCKCTGSLQYVHQECMKKWLQAKINSGSSLEAVTTCELCKEKLQLNLEDFDIHELHRAHANEQAEYEFISSGLYLVVLLHLCEQSFSDMMGNTIEPSTRVRFINLARTLQAHMEDLETSEDEF.

M1 is modified (N-acetylmethionine). Disordered regions lie at residues 1–165 (MESK…SHRS), 201–280 (STNH…GRRT), 296–343 (FFSR…RASE), 360–425 (LSQN…HLFR), 440–474 (SLGA…RNTG), and 512–532 (SSAD…PEKL). Over residues 37-48 (YHSRDSSFRLDS) the composition is skewed to basic and acidic residues. 2 stretches are compositionally biased toward polar residues: residues 61–83 (PYQS…SQNQ) and 95–132 (SCTN…SSMV). A compositionally biased stretch (basic and acidic residues) spans 140–153 (LMRERRDLERRRDS). Polar residues predominate over residues 201-214 (STNHQLPSEHQTVP). Positions 215-233 (SSRDSSRSSFRSHFSPRQS) are enriched in low complexity. The segment covering 235 to 272 (SFRNSSHPAFSYLSSRNETPTISSSERAGSSQRPFQES) has biased composition (polar residues). Residues 296–305 (FFSRRSSQDS) are compositionally biased toward low complexity. Residues 306-336 (LNTRSLSSENYISPRTLTSQSRNNGASSSEV) show a composition bias toward polar residues. Phosphoserine occurs at positions 318 and 389. The span at 450–462 (ASGASGNASASGS) shows a compositional bias: low complexity. The span at 516-532 (GKSEKAKSAPSRDPEKL) shows a compositional bias: basic and acidic residues. Residues 545–615 (DEEEEGDLCR…ELCKEKLQLN (71 aa)) form an RING-CH-type zinc finger. 8 residues coordinate Zn(2+): C553, C556, C571, C573, H581, C584, C605, and C608. T687 is modified (phosphothreonine). Residue S688 is modified to Phosphoserine.

It is found in the cytoplasm. The catalysed reaction is S-ubiquitinyl-[E2 ubiquitin-conjugating enzyme]-L-cysteine + [acceptor protein]-L-lysine = [E2 ubiquitin-conjugating enzyme]-L-cysteine + N(6)-ubiquitinyl-[acceptor protein]-L-lysine.. Its pathway is protein modification; protein ubiquitination. E3 ubiquitin-protein ligase which may specifically enhance the E2 activity of HIP2. E3 ubiquitin ligases accept ubiquitin from an E2 ubiquitin-conjugating enzyme in the form of a thioester and then directly transfer the ubiquitin to targeted substrates. May be involved in T-cell proliferation by regulating LIF secretion. May play a role in lysosome homeostasis. Promotes 'Lys-6', 'Lys-11' and 'Lys-63'-linked mixed polyubiquitination on ATG14 leading to the inhibition of autophagy by impairing the interaction between ATG14 and STX7. Participates in the dopamine-mediated negative regulation of the NLRP3 inflammasome by promoting its uibiquitination and subsequent degradation. In Rattus norvegicus (Rat), this protein is E3 ubiquitin-protein ligase MARCHF7 (Marchf7).